A 148-amino-acid chain; its full sequence is Protein-arginine-phosphatase (148 aa).

Catalysis depends on Cys9, which acts as the Nucleophile. Position 10–15 (10–15) interacts with substrate; that stretch reads TGNTCR. Residue Arg15 is part of the active site. The active-site Proton donor is the Asp117.

The protein belongs to the low molecular weight phosphotyrosine protein phosphatase family. Is present in solution as a mixture of monomers, dimers and higher order oligomers (trimers and tetramers).

It carries out the reaction N(omega)-phospho-L-arginyl-[protein] + H2O = L-arginyl-[protein] + phosphate. Its activity is regulated as follows. Irreversibly inhibited by the synthetic inhibitor cyc-SeCN-amidine, which inactivates the enzyme by inducing disulfide bond formation between the two active site cysteine residues Cys-9 and Cys-14. Functionally, catalyzes the specific dephosphorylation of phosphoarginine residues in proteins. Probably counteracts the protein arginine kinase McsB in vivo. Exhibits almost no activity against pTyr peptides. Protein arginine phosphorylation has a physiologically important role and is involved in the regulation of many critical cellular processes, such as protein homeostasis, motility, competence, and stringent and stress responses, by regulating gene expression and protein activity. The protein is Protein-arginine-phosphatase (ywle) of Geobacillus stearothermophilus (Bacillus stearothermophilus).